The chain runs to 421 residues: Gamma-glutamyl phosphate reductase (421 aa).

This sequence belongs to the gamma-glutamyl phosphate reductase family.

It localises to the cytoplasm. The enzyme catalyses L-glutamate 5-semialdehyde + phosphate + NADP(+) = L-glutamyl 5-phosphate + NADPH + H(+). It functions in the pathway amino-acid biosynthesis; L-proline biosynthesis; L-glutamate 5-semialdehyde from L-glutamate: step 2/2. In terms of biological role, catalyzes the NADPH-dependent reduction of L-glutamate 5-phosphate into L-glutamate 5-semialdehyde and phosphate. The product spontaneously undergoes cyclization to form 1-pyrroline-5-carboxylate. This is Gamma-glutamyl phosphate reductase from Acinetobacter baylyi (strain ATCC 33305 / BD413 / ADP1).